The following is a 377-amino-acid chain: Leucine aminopeptidase A (377 aa).

The N-terminal stretch at 1-18 is a signal peptide; that stretch reads MRFLPCIATLAATASALA. The propeptide occupies 19-79; the sequence is IGDHVRSDDQ…SNKKQKLAVT (61 aa). N-linked (GlcNAc...) asparagine glycosylation is present at asparagine 87. Histidine 176, aspartate 195, glutamate 234, and aspartate 261 together coordinate Zn(2+). Asparagine 288 carries N-linked (GlcNAc...) asparagine glycosylation. The cysteines at positions 310 and 314 are disulfide-linked. Histidine 343 contacts Zn(2+).

Belongs to the peptidase M28 family. M28E subfamily. As to quaternary structure, monomer. Zn(2+) is required as a cofactor.

The protein localises to the secreted. Calcium, magnesium and manganese cations reduce peptidase activity to 20.3-51.3 percent. The metal ion chelating reagent EDTA almost completely inhibits activity. The protease inhibitor bacitracin and the aminopeptidase B inhibitor bestatin, as well as DTT and beta-mercaptoethanol act also as lap A inhibitorsD. Extracellular aminopeptidase that allows assimilation of proteinaceous substrates. In Aspergillus oryzae (strain ATCC 42149 / RIB 40) (Yellow koji mold), this protein is Leucine aminopeptidase A (lapA).